The following is a 450-amino-acid chain: Salicylate synthase (450 aa).

Residue E252 is the Proton donor of the active site. 270–271 serves as a coordination point for substrate; the sequence is GT. A Mg(2+)-binding site is contributed by E297. Substrate contacts are provided by residues Y385, R405, and 419–421; that span reads GAG. The Mg(2+) site is built by E431 and E434. K438 provides a ligand contact to substrate.

This sequence belongs to the anthranilate synthase component I family. Salicylate synthase subfamily. Monomer. Mg(2+) is required as a cofactor.

It carries out the reaction chorismate = isochorismate. It catalyses the reaction isochorismate = salicylate + pyruvate. The enzyme catalyses chorismate = prephenate. Its pathway is siderophore biosynthesis; mycobactin biosynthesis. Involved in the incorporation of salicylate into the virulence-conferring salicylate-based siderophore mycobactin. Catalyzes the initial conversion of chorismate to yield the intermediate isochorismate (isochorismate synthase activity), and the subsequent elimination of the enolpyruvyl side chain in a lyase reaction to give salicylate (isochorismate pyruvate-lyase activity). In the absence of magnesium, MbtI displays a chorismate mutase activity and converts chorismate to prephenate. This Mycobacterium bovis (strain ATCC BAA-935 / AF2122/97) protein is Salicylate synthase (mbtI).